Consider the following 382-residue polypeptide: D-galactonate dehydratase (382 aa).

Asp-183 contacts Mg(2+). Residue His-185 is the Proton donor of the active site. Residues Glu-209 and Glu-235 each contribute to the Mg(2+) site. His-285 acts as the Proton acceptor in catalysis.

Belongs to the mandelate racemase/muconate lactonizing enzyme family. GalD subfamily. Mg(2+) is required as a cofactor.

The catalysed reaction is D-galactonate = 2-dehydro-3-deoxy-D-galactonate + H2O. It participates in carbohydrate acid metabolism; D-galactonate degradation; D-glyceraldehyde 3-phosphate and pyruvate from D-galactonate: step 1/3. Catalyzes the dehydration of D-galactonate to 2-keto-3-deoxy-D-galactonate. The polypeptide is D-galactonate dehydratase (Salmonella dublin (strain CT_02021853)).